A 122-amino-acid chain; its full sequence is Cytochrome c-556 (122 aa).

Positions 11, 111, 114, and 115 each coordinate heme. The heme c site is built by M11, C111, C114, and H115.

Monomer. In terms of processing, binds 1 heme c group covalently per subunit.

Low-spin monoheme cytochrome c. The protein is Cytochrome c-556 of Agrobacterium tumefaciens (strain II Chrys).